Here is a 359-residue protein sequence, read N- to C-terminus: G-protein coupled receptor 15 (359 aa).

Topologically, residues 1–33 (MDPEETSVYLDYYYATSPNPDIRETHSHVPYTS) are extracellular. Residues 34–54 (VFLPVFYTAVFLTGVLGNLVL) traverse the membrane as a helical segment. Over 55 to 69 (MGALHFKPGSRRLID) the chain is Cytoplasmic. Residues 70 to 90 (IFIINLAASDFIFLVTLPLWV) traverse the membrane as a helical segment. The Extracellular portion of the chain corresponds to 91–120 (DKEASLGLWRTGSFLCKGSSYMISVNMHCS). The chain crosses the membrane as a helical span at residues 121 to 141 (VFLLTCMSVDRYLAIVCPVVS). Topologically, residues 142–149 (RKFRRTDC) are cytoplasmic. A helical membrane pass occupies residues 150-170 (AYVVCASIWFISCLLGLPTLL). Over 171 to 192 (SRELTLIDDKPYCAEKKATPLK) the chain is Extracellular. A helical membrane pass occupies residues 193 to 213 (LIWSLVALIFTFFVPLLNIVT). The Cytoplasmic segment spans residues 214 to 239 (CYCCIARKLCAHYQQSGRHNKKLKKS). The helical transmembrane segment at 240–260 (IKIILIVVAAFLVSWLPFNTF) threads the bilayer. Topologically, residues 261-283 (KLLAIVSGLQERYFPSAMLQLGM) are extracellular. Residues 284–304 (EVSGPLAFANSCVNPFIYYIF) form a helical membrane-spanning segment. The Cytoplasmic portion of the chain corresponds to 305-359 (DSYIRRAIVHCLCPCLKNYDFGSSTETSDSHLTKALSTFIHAEDFTRRRKRSVSL). Position 358 is a phosphoserine (S358).

The protein belongs to the G-protein coupled receptor 1 family. In terms of assembly, interacts with adapter YWHAE; this interaction promotes ER-to-Golgi transport of GPR15. Post-translationally, phosphorylation is necessary for YWHAE binding and efficient surface expression. In terms of processing, O-glycosylated. Sialylated O-glycans in the N-terminal tail inhibits binding of GPR15LG. Sulfation is required for efficient binding of GPR15LG.

Its subcellular location is the cell membrane. Its function is as follows. G protein-coupled receptor that plays an important role in immune homeostasis. Acts via its natural ligand GPR15LG, a chemokine-like polypeptide strongly expressed in gastrointestinal tissues. GPR15-GPR15LG signaling axis regulates intestinal homeostasis and inflammation through the migration of immune cells. Controls thereby the specific homing of T-cells, particularly FOXP3+ regulatory T-cells (Tregs), to the large intestine lamina propria. Also required for skin localization of thymus-derived dendritic epidermal T-cells. Plays an important role in mediating cytoprotective function as well as angiogenesis of thrombomodulin. Mechanistically, preferentially signals through the Gi/o pathway to inhibit adenylate cyclase activity and activate a phosphatidylinositol-calcium second messenger system that regulates the release of Ca(2+) ions from intracellular stores. This chain is G-protein coupled receptor 15 (GPR15), found in Macaca fascicularis (Crab-eating macaque).